Reading from the N-terminus, the 558-residue chain is Sinalpyl alcohol oxidase Nec3 (558 aa).

An N-terminal signal peptide occupies residues 1–28 (MATMAILQRTFSFILIFSIALHLKSLFA). An FAD-binding site is contributed by 64–65 (TA). N-linked (GlcNAc...) asparagine glycosylation occurs at Asn-76. FAD-binding positions include 83-84 (ER), Val-131, Ser-135, and 139-142 (NFGF). An N-linked (GlcNAc...) asparagine glycan is attached at Asn-180. Val-247 is an FAD binding site. Residues Asn-308, Asn-386, and Asn-473 are each glycosylated (N-linked (GlcNAc...) asparagine). Cys-433 and Cys-484 are disulfide-bonded. 492–493 (YH) lines the FAD pocket. The active-site Proton donor is His-493. Asn-531 (proton acceptor) is an active-site residue. An FAD-binding site is contributed by 532–533 (PQ).

It belongs to the GMC oxidoreductase family. In terms of assembly, monomer. The cofactor is FAD. As to expression, confined to nectaries.

It catalyses the reaction (E)-sinapyl alcohol + O2 = (E)-sinapaldehyde + H2O2. The protein operates within alkaloid biosynthesis. Functionally, involved in the production of blood-red nectar containing the alkaloid nesocodin and that serves as a visual attractant for pollinator visitation, including vertebrates such as Phelsuma geckos. The nectar is initially acidic and pale yellow, but slowly becomes alkaline before turning into red within 24 hours. Together with NEC1 and NEC2, facilitates the condensation of sinapaldehyde ((E)-3,5-dimethoxy-4-hydroxycinnamaldehyde) and proline to form nesocodin, a pigment with a stable imine bond. Catalyzes the conversion of sinapyl alcohol to sinapaldehyde. The protein is Sinalpyl alcohol oxidase Nec3 of Nesocodon mauritianus (Blue Mauritius bellflower).